The sequence spans 231 residues: uncharacterized protein (231 aa).

3 helical membrane-spanning segments follow: residues 6–26 (IKLI…YKYI), 39–59 (NIVS…STFS), and 66–86 (FCFQ…GYAF).

The protein localises to the cell membrane. This is an uncharacterized protein from Rickettsia prowazekii (strain Madrid E).